A 185-amino-acid polypeptide reads, in one-letter code: MKVVVVAGIPGSGSTTVLENTLKELDYLNVNYGDVMLEIAVEKGLVENRDQMRTLPPEVQKDIQRAAAKSIRERSLENNIIVDTHCTIKTPAGFLPGLPVWVLEELEPDMFVLVEADAEEIFTRRISDKTRDRDVESLQEIDLHQQMNRAAAMAYATLTGATVKIVKNHNNQLESAVSEMKSVLE.

Gly8 to Thr16 contacts ATP.

This sequence belongs to the archaeal adenylate kinase family.

It is found in the cytoplasm. The catalysed reaction is AMP + ATP = 2 ADP. This is Adenylate kinase (adkA) from Methanothermobacter thermautotrophicus (strain ATCC 29096 / DSM 1053 / JCM 10044 / NBRC 100330 / Delta H) (Methanobacterium thermoautotrophicum).